Here is a 975-residue protein sequence, read N- to C-terminus: Glycine dehydrogenase (decarboxylating) (975 aa).

K723 carries the post-translational modification N6-(pyridoxal phosphate)lysine.

This sequence belongs to the GcvP family. In terms of assembly, the glycine cleavage system is composed of four proteins: P, T, L and H. Requires pyridoxal 5'-phosphate as cofactor.

It catalyses the reaction N(6)-[(R)-lipoyl]-L-lysyl-[glycine-cleavage complex H protein] + glycine + H(+) = N(6)-[(R)-S(8)-aminomethyldihydrolipoyl]-L-lysyl-[glycine-cleavage complex H protein] + CO2. The glycine cleavage system catalyzes the degradation of glycine. The P protein binds the alpha-amino group of glycine through its pyridoxal phosphate cofactor; CO(2) is released and the remaining methylamine moiety is then transferred to the lipoamide cofactor of the H protein. The chain is Glycine dehydrogenase (decarboxylating) from Burkholderia thailandensis (strain ATCC 700388 / DSM 13276 / CCUG 48851 / CIP 106301 / E264).